Consider the following 917-residue polypeptide: Hexokinase-2 (917 aa).

The residue at position 1 (Met-1) is an N-acetylmethionine. The segment at 1 to 16 (MIASHMIACLFTELNQ) is mitochondrial-binding peptide (MBP). Hexokinase domains are found at residues 16-458 (QNQV…MVTA) and 464-906 (ADQH…LITA). Residues Arg-30 and 84-89 (DLGGTN) contribute to the ATP site. Residues 73–207 (DGTEHGEFLA…DFDIDIVAVV (135 aa)) are hexokinase small subdomain 1. A D-glucose 6-phosphate-binding site is contributed by 84 to 88 (DLGGT). D-glucose-binding positions include 155 to 156 (SF), 172 to 173 (TK), and 208 to 209 (ND). A hexokinase large subdomain 1 region spans residues 208-447 (NDTVGTMMTC…CDVRFLRSED (240 aa)). Residues Asp-209 and Thr-232 each contribute to the D-glucose 6-phosphate site. Residues Asn-235, Glu-260, and 291-294 (QLFE) each bind D-glucose. 413–415 (DGS) provides a ligand contact to D-glucose 6-phosphate. Residue 425–426 (KR) participates in ATP binding. Residues Ser-449 and 532–536 (DLGGT) each bind D-glucose 6-phosphate. Residues 521-655 (DGTEKGDFLA…EFDLDVVAVV (135 aa)) form a hexokinase small subdomain 2 region. Residue 532 to 537 (DLGGTN) participates in ATP binding. Residues 603 to 604 (SF), 620 to 621 (TK), and 656 to 657 (ND) each bind D-glucose. A hexokinase large subdomain 2 region spans residues 656–895 (NDTVGTMMTC…CDVSFLESED (240 aa)). D-glucose 6-phosphate is bound by residues Asp-657 and Thr-680. Thr-680 contributes to the ATP binding site. Residues 682 to 683 (SN), Glu-708, and 739 to 742 (QRFE) contribute to the D-glucose site. ATP is bound by residues 747–748 (GM), 784–788 (TKFLS), and 863–867 (TLYKL). D-glucose 6-phosphate is bound by residues 861-863 (DGT) and Ser-897.

This sequence belongs to the hexokinase family. In terms of assembly, monomer. Interacts with TIGAR; the interaction increases hexokinase activity in a hypoxia- and HIF1A-dependent manner.

Its subcellular location is the mitochondrion outer membrane. The protein resides in the cytoplasm. It is found in the cytosol. The catalysed reaction is a D-hexose + ATP = a D-hexose 6-phosphate + ADP + H(+). It catalyses the reaction D-fructose + ATP = D-fructose 6-phosphate + ADP + H(+). It carries out the reaction D-glucose + ATP = D-glucose 6-phosphate + ADP + H(+). It participates in carbohydrate metabolism; hexose metabolism. Its pathway is carbohydrate degradation; glycolysis; D-glyceraldehyde 3-phosphate and glycerone phosphate from D-glucose: step 1/4. With respect to regulation, hexokinase activity is specifically inhibited by 2,6-disubstituted glucosamines. Its function is as follows. Catalyzes the phosphorylation of hexose, such as D-glucose and D-fructose, to hexose 6-phosphate (D-glucose 6-phosphate and D-fructose 6-phosphate, respectively). Mediates the initial step of glycolysis by catalyzing phosphorylation of D-glucose to D-glucose 6-phosphate. Plays a key role in maintaining the integrity of the outer mitochondrial membrane by preventing the release of apoptogenic molecules from the intermembrane space and subsequent apoptosis. This Rattus norvegicus (Rat) protein is Hexokinase-2.